The sequence spans 622 residues: MYRTRSSDEVATLTDPTSSSDVATSADPTSSSAVTTLVDPTTSVVISTSVDQTSSSDVATSVDPTTSVISSTSADPTTSADSTTSTVQTTSVDPTSSVVSSSSADLSSSVISSSSADPTTSTVQTTSVDPTSSVVSSSSADLSSSVISSSSADPTTSTVQTTSVDPTSSVVSSAPVDPASSVVSLTSSYPTSSSTVTISANSNGSATLTAQTTSIDPVSSIVSSSGATTIISSASIDPASSVVSSTSSEPTSFIVSSTSVYSTRPSGPTTSTDLATFSDTIILRVSTTSTSQDTQTVSSSLTDMVSSTGSADLSVSSIQRSQVDPSTFAVSNSPVYPTASTGSTSTGIPIASESLSLSRQQGISATSSSSIVTLTPVDSASSSRSSATSIIKPNMPVSSNDSKTQSSVSVVDTFQSTKSSYPSITSADPTTLASENGLVGSSSSAHPITLDRTYASAHASVTDIVSRVTDSTRHTTLVTSNINIQSEVGNLNYSGPKDTTITKQSAFMTSPASTSTISNVQSTASVMNHSIEDNISATASLESVSGTSTKDYSSQSSAIHYTNSFTTTTTNAFITSKHSIAAVSTGAITSSASISLIMEGSANIEAVGKLVWLAAALPLAFI.

3 disordered regions span residues 1–35, 47–200, and 374–405; these read MYRTRSSDEVATLTDPTSSSDVATSADPTSSSAVT, STSV…TISA, and LTPVDSASSSRSSATSIIKPNMPVSSNDSKTQ. Residues 14–35 show a composition bias toward polar residues; sequence TDPTSSSDVATSADPTSSSAVT. Low complexity-rich tracts occupy residues 47-199 and 379-389; these read STSV…VTIS and SASSSRSSATS. Positions 396–405 are enriched in polar residues; it reads PVSSNDSKTQ.

The protein is Pheromone-regulated protein PRM7 (PRM7) of Saccharomyces cerevisiae (strain YJM789) (Baker's yeast).